Reading from the N-terminus, the 736-residue chain is Acyl-coenzyme A oxidase (736 aa).

This sequence belongs to the acyl-CoA oxidase family. Requires FAD as cofactor.

The protein resides in the peroxisome. The catalysed reaction is a 2,3-saturated acyl-CoA + O2 = a (2E)-enoyl-CoA + H2O2. It functions in the pathway lipid metabolism; peroxisomal fatty acid beta-oxidation. The protein is Acyl-coenzyme A oxidase (POX1) of Kluyveromyces lactis (strain ATCC 8585 / CBS 2359 / DSM 70799 / NBRC 1267 / NRRL Y-1140 / WM37) (Yeast).